The sequence spans 631 residues: Eukaryotic translation initiation factor 2-alpha kinase 1 (631 aa).

The interval 1–34 (MQGGNSGVRKREEEGGGEGAVAAPPAIDFPAESS) is disordered. The SIFI-degron signature appears at 85–104 (LRSRQVFKLLCQTFIKMGLL). The Protein kinase domain occupies 167–583 (FEEVAILGKG…AVQLLQSELF (417 aa)). Residues 173-181 (LGKGGYGRV) and K196 each bind ATP. The disordered stretch occupies residues 260–301 (QEEDREQYDVKNDESSSSSIVFAEPTPEKGKRFGESDTENQN). T285 bears the Phosphothreonine mark. Basic and acidic residues predominate over residues 285–301 (TPEKGKRFGESDTENQN). Residues 410 to 415 (ACPYVM) form an HRM 1 repeat. Residue D442 is the Proton acceptor of the active site. A phosphothreonine; by autocatalysis mark is found at T486 and T488. Phosphothreonine is present on T493. The HRM 2 repeat unit spans residues 552 to 557 (RCPVQA).

This sequence belongs to the protein kinase superfamily. Ser/Thr protein kinase family. GCN2 subfamily. In terms of assembly, synthesized in an inactive form that binds to the N-terminal domain of CDC37. Has to be associated with a multiprotein complex containing Hsp90, CDC37 and PPP5C for maturation and activation by autophosphorylation. The phosphatase PPP5C modulates this activation. Homodimer; homodimerizes in presence of heme, forming a disulfide-linked inactive homodimer. Interacts with DELE1; binds both to full-length DELE1 and processed form of DELE1 (S-DELE1) in response to stress, leading to activate its protein kinase activity and trigger the integrated stress response (ISR). Activated by autophosphorylation; phosphorylated predominantly on serine and threonine residues, but also on tyrosine residues. Autophosphorylation at Thr-488 is required for kinase activation. The active autophosphorylated form apparently is largely refractory to cellular heme fluctuations. Post-translationally, ubiquitinated and degraded by the SIFI complex once the mitochondrial stress has been resolved, thereby providing stress response silencing. Within the SIFI complex, UBR4 initiates ubiquitin chain that are further elongated or branched by KCMF1.

Its subcellular location is the cytoplasm. It carries out the reaction L-seryl-[protein] + ATP = O-phospho-L-seryl-[protein] + ADP + H(+). The enzyme catalyses L-threonyl-[protein] + ATP = O-phospho-L-threonyl-[protein] + ADP + H(+). Its activity is regulated as follows. In normal conditions, the protein kinase activity is inhibited; inhibition is relieved by various stress conditions. Inhibited by heme: in presence of heme, forms a disulfide-linked inactive homodimer. Heme depletion relieves inhibition and stimulates kinase activity by autophosphorylation. Inhibited by the heme metabolites biliverdin and bilirubin. Induced by oxidative stress generated by arsenite treatment. Binding of nitric oxide (NO) to the heme iron in the N-terminal heme-binding domain activates the kinase activity, while binding of carbon monoxide (CO) suppresses kinase activity. Protein kinase activity is also activated upon binding to DELE1 in response to various stress, triggering the integrated stress response (ISR): activated by full-length DELE1 in response to iron deficiency, while it is activated by the processed form of DELE1 (S-DELE1) in response to mitochondrial stress. Metabolic-stress sensing protein kinase that phosphorylates the alpha subunit of eukaryotic translation initiation factor 2 (EIF2S1/eIF-2-alpha) in response to various stress conditions. Key activator of the integrated stress response (ISR) required for adaptation to various stress, such as heme deficiency, oxidative stress, osmotic shock, mitochondrial dysfunction and heat shock. EIF2S1/eIF-2-alpha phosphorylation in response to stress converts EIF2S1/eIF-2-alpha in a global protein synthesis inhibitor, leading to a global attenuation of cap-dependent translation, while concomitantly initiating the preferential translation of ISR-specific mRNAs, such as the transcriptional activator ATF4, and hence allowing ATF4-mediated reprogramming. Acts as a key sensor of heme-deficiency: in normal conditions, binds hemin via a cysteine thiolate and histidine nitrogenous coordination, leading to inhibit the protein kinase activity. This binding occurs with moderate affinity, allowing it to sense the heme concentration within the cell: heme depletion relieves inhibition and stimulates kinase activity, activating the ISR. Thanks to this unique heme-sensing capacity, plays a crucial role to shut off protein synthesis during acute heme-deficient conditions. In red blood cells (RBCs), controls hemoglobin synthesis ensuring a coordinated regulation of the synthesis of its heme and globin moieties. It thereby plays an essential protective role for RBC survival in anemias of iron deficiency. Iron deficiency also triggers activation by full-length DELE1. Also activates the ISR in response to mitochondrial dysfunction: HRI/EIF2AK1 protein kinase activity is activated upon binding to the processed form of DELE1 (S-DELE1), thereby promoting the ATF4-mediated reprogramming. Also acts as an activator of mitophagy in response to mitochondrial damage: catalyzes phosphorylation of eIF-2-alpha (EIF2S1) following activation by S-DELE1, thereby promoting mitochondrial localization of EIF2S1, triggering PRKN-independent mitophagy. The protein is Eukaryotic translation initiation factor 2-alpha kinase 1 of Macaca fascicularis (Crab-eating macaque).